The following is a 952-amino-acid chain: Aminopeptidase 2, mitochondrial (952 aa).

The N-terminal 52 residues, 1–52 (MPIVRWLLLKSAVRGSSLIGKAHPCLRSIAAHPRYLSNVYSPPAGVSRSLRI), are a transit peptide targeting the mitochondrion. Substrate-binding positions include Glu-228 and 360–364 (GAMEN). Asn-381 carries N-linked (GlcNAc...) asparagine glycosylation. A Zn(2+)-binding site is contributed by His-396. The active-site Proton acceptor is Glu-397. Zn(2+) contacts are provided by His-400 and Glu-419. N-linked (GlcNAc...) asparagine glycosylation occurs at Asn-713.

This sequence belongs to the peptidase M1 family. Zn(2+) serves as cofactor.

The protein localises to the periplasm. It localises to the cytoplasm. Its subcellular location is the mitochondrion. Its function is as follows. Involved in the cellular supply of leucine from externally offered leucine-containing dipeptide substrates. The polypeptide is Aminopeptidase 2, mitochondrial (APE2) (Saccharomyces cerevisiae (strain ATCC 204508 / S288c) (Baker's yeast)).